Consider the following 201-residue polypeptide: 3-isopropylmalate dehydratase small subunit (201 aa).

The protein belongs to the LeuD family. LeuD type 1 subfamily. Heterodimer of LeuC and LeuD.

It carries out the reaction (2R,3S)-3-isopropylmalate = (2S)-2-isopropylmalate. Its pathway is amino-acid biosynthesis; L-leucine biosynthesis; L-leucine from 3-methyl-2-oxobutanoate: step 2/4. Its function is as follows. Catalyzes the isomerization between 2-isopropylmalate and 3-isopropylmalate, via the formation of 2-isopropylmaleate. This is 3-isopropylmalate dehydratase small subunit from Brucella anthropi (strain ATCC 49188 / DSM 6882 / CCUG 24695 / JCM 21032 / LMG 3331 / NBRC 15819 / NCTC 12168 / Alc 37) (Ochrobactrum anthropi).